A 226-amino-acid chain; its full sequence is Cytidylate kinase (226 aa).

11 to 19 (GPAAAGKST) is an ATP binding site.

This sequence belongs to the cytidylate kinase family. Type 1 subfamily.

It localises to the cytoplasm. The enzyme catalyses CMP + ATP = CDP + ADP. It carries out the reaction dCMP + ATP = dCDP + ADP. In Bacillus licheniformis (strain ATCC 14580 / DSM 13 / JCM 2505 / CCUG 7422 / NBRC 12200 / NCIMB 9375 / NCTC 10341 / NRRL NRS-1264 / Gibson 46), this protein is Cytidylate kinase.